Here is a 487-residue protein sequence, read N- to C-terminus: b(0,+)-type amino acid transporter 1 (487 aa).

A disordered region spans residues 1–20; it reads MEETSLRRRREDEKSTHSTE. The Cytoplasmic portion of the chain corresponds to 1–31; the sequence is MEETSLRRRREDEKSTHSTELKTTSLQKEVG. Ser18 is subject to Phosphoserine. A helical membrane pass occupies residues 32–55; the sequence is LLSGICIIVGTIIGSGIFISPKSV. 43 to 47 provides a ligand contact to L-arginine; that stretch reads IIGSG. Topologically, residues 56 to 62 are extracellular; that stretch reads LANTESV. Residues 63 to 84 form a helical membrane-spanning segment; sequence GPCLIIWAACGILATLGALCFA. Residues 85-110 are Cytoplasmic-facing; it reads ELGTMITKSGGEYPYLMEAFGPIPAY. A helical membrane pass occupies residues 111-137; it reads LFSWTSLIVMKPSSFAIICLSFSEYVC. The Extracellular portion of the chain corresponds to 138–147; the sequence is AAFYSGCKPP. The next 2 helical transmembrane spans lie at 148 to 169 and 170 to 193; these read AVVVKLLAAAAILFITTVNALS and VRLGSYVQNVFTAAKMVIVAIIII. Over 194-217 the chain is Extracellular; it reads SGLVFLAQGNVKNFQNSFEGTQTS. A helical transmembrane segment spans residues 218–238; the sequence is VGAISLAFYNGLWAYDGWNQL. Asp233 provides a ligand contact to L-arginine. Residues 239–251 lie on the Cytoplasmic side of the membrane; that stretch reads NYITEELRNPYRN. Residues 252–274 traverse the membrane as a helical segment; sequence LPMAIVIGIPLVTVCYILMNIAY. At 275–302 the chain is on the extracellular side; the sequence is FTVMTPTELLQSQAVAVTFGDRVLYPAS. Residues 303–325 form a helical membrane-spanning segment; that stretch reads WVVPLFVAFSTIGAANGTCFTAG. The Cytoplasmic segment spans residues 326 to 351; sequence RLIYVAGREGHMLKVLSYISVKRLTP. A run of 2 helical transmembrane segments spans residues 352 to 370 and 371 to 391; these read APALIFYGIIAIIYIIPGD and INSLVNYFSFAAWLFYGMTIL. Over 392–410 the chain is Cytoplasmic; sequence GLVVMRFTRKDLERPIKVP. A helical transmembrane segment spans residues 411–431; the sequence is LFIPIIVILVSLFLILAPIIS. The Extracellular portion of the chain corresponds to 432 to 434; sequence EPA. Residues 435–450 traverse the membrane as a helical segment; it reads WEYLYCVLFILSGLIF. The Cytoplasmic portion of the chain corresponds to 451 to 487; the sequence is YFLFVYYKFGWAQRISRPVTKHLQMLMEVVPPEKDPE.

The protein belongs to the amino acid-polyamine-organocation (APC) superfamily. Disulfide-linked heterodimer composed of the catalytic light chain subunit SLC7A9 and the heavy chain subunit SLC3A1. The heterodimer is the minimal functional unit. Assembles in heterotetramers (dimers of heterodimers) and higher order oligomers; the oligomerization is mediated by SLC3A1 likely to prevent degradation and facilitate heteromer trafficking to the plasma membrane. Interacts with CAV1. In terms of tissue distribution, expressed in the brush border membrane in the kidney (at protein level).

The protein resides in the apical cell membrane. It carries out the reaction L-leucine(out) + L-arginine(in) = L-leucine(in) + L-arginine(out). The enzyme catalyses L-histidine(out) + L-arginine(in) = L-histidine(in) + L-arginine(out). It catalyses the reaction L-arginine(in) + L-phenylalanine(out) = L-arginine(out) + L-phenylalanine(in). The catalysed reaction is L-cysteine(out) + L-arginine(in) = L-cysteine(in) + L-arginine(out). It carries out the reaction L-cystine(out) + L-arginine(in) = L-cystine(in) + L-arginine(out). The enzyme catalyses L-lysine(out) + L-arginine(in) = L-lysine(in) + L-arginine(out). Associates with SLC3A1 to form a functional transporter complex that mediates the electrogenic exchange between cationic amino acids and neutral amino acids, with a stoichiometry of 1:1. Has system b(0,+)-like activity with high affinity for extracellular cationic amino acids and L-cystine and lower affinity for intracellular neutral amino acids. Substrate exchange is driven by high concentration of intracellular neutral amino acids and the intracellular reduction of L-cystine to L-cysteine. Required for reabsorption of L-cystine and dibasic amino acids across the brush border membrane in renal proximal tubules. This chain is b(0,+)-type amino acid transporter 1 (Slc7a9), found in Mus musculus (Mouse).